Consider the following 363-residue polypeptide: Heat-inducible transcription repressor HrcA (363 aa).

It belongs to the HrcA family.

Functionally, negative regulator of class I heat shock genes (grpE-dnaK-dnaJ and groELS operons). Prevents heat-shock induction of these operons. This chain is Heat-inducible transcription repressor HrcA, found in Rhizobium radiobacter (Agrobacterium tumefaciens).